A 207-amino-acid chain; its full sequence is MARYLGPKAKLSRREGTDLFLKSARRSIGDKAKFDSKPGQHGRTSGARTSDFGLQLREKQKVKRMYGVLEKQFRRYFEEADRRKGNTGANLLSLLESRLDNVVYRMGFGSTRAEARQLVSHKAMTVNGKSVNIPSYMVKAGDMIAVRDKSKKQNRIVEALQLAQQVGMPAWVEINAEKAEGTFKAVPDRDQFAADVNESLIVELYSR.

Residues 31–53 form a disordered region; that stretch reads KAKFDSKPGQHGRTSGARTSDFG. The 64-residue stretch at 97-160 folds into the S4 RNA-binding domain; it reads SRLDNVVYRM…KKQNRIVEAL (64 aa).

This sequence belongs to the universal ribosomal protein uS4 family. In terms of assembly, part of the 30S ribosomal subunit. Contacts protein S5. The interaction surface between S4 and S5 is involved in control of translational fidelity.

Functionally, one of the primary rRNA binding proteins, it binds directly to 16S rRNA where it nucleates assembly of the body of the 30S subunit. In terms of biological role, with S5 and S12 plays an important role in translational accuracy. This chain is Small ribosomal subunit protein uS4, found in Albidiferax ferrireducens (strain ATCC BAA-621 / DSM 15236 / T118) (Rhodoferax ferrireducens).